Consider the following 262-residue polypeptide: Acyl-[acyl-carrier-protein]--UDP-N-acetylglucosamine O-acyltransferase (262 aa).

Belongs to the transferase hexapeptide repeat family. LpxA subfamily. Homotrimer.

It is found in the cytoplasm. It carries out the reaction a (3R)-hydroxyacyl-[ACP] + UDP-N-acetyl-alpha-D-glucosamine = a UDP-3-O-[(3R)-3-hydroxyacyl]-N-acetyl-alpha-D-glucosamine + holo-[ACP]. The protein operates within glycolipid biosynthesis; lipid IV(A) biosynthesis; lipid IV(A) from (3R)-3-hydroxytetradecanoyl-[acyl-carrier-protein] and UDP-N-acetyl-alpha-D-glucosamine: step 1/6. Functionally, involved in the biosynthesis of lipid A, a phosphorylated glycolipid that anchors the lipopolysaccharide to the outer membrane of the cell. This is Acyl-[acyl-carrier-protein]--UDP-N-acetylglucosamine O-acyltransferase from Mannheimia succiniciproducens (strain KCTC 0769BP / MBEL55E).